Consider the following 332-residue polypeptide: Ribosomal RNA small subunit methyltransferase H (332 aa).

Residues 36–38 (GGY), Asp-54, Phe-81, Asp-102, and Gln-109 each bind S-adenosyl-L-methionine. The segment at 297 to 318 (ARSAKLRGAERTEAPAHAAGDL) is disordered.

The protein belongs to the methyltransferase superfamily. RsmH family.

The protein localises to the cytoplasm. The catalysed reaction is cytidine(1402) in 16S rRNA + S-adenosyl-L-methionine = N(4)-methylcytidine(1402) in 16S rRNA + S-adenosyl-L-homocysteine + H(+). In terms of biological role, specifically methylates the N4 position of cytidine in position 1402 (C1402) of 16S rRNA. This Rhodopseudomonas palustris (strain TIE-1) protein is Ribosomal RNA small subunit methyltransferase H.